A 427-amino-acid chain; its full sequence is 3-phosphoshikimate 1-carboxyvinyltransferase (427 aa).

Positions 23, 24, and 28 each coordinate 3-phosphoshikimate. K23 serves as a coordination point for phosphoenolpyruvate. Phosphoenolpyruvate-binding residues include G97 and R125. Positions 170, 171, 172, 198, 314, 337, and 341 each coordinate 3-phosphoshikimate. Q172 is a binding site for phosphoenolpyruvate. The active-site Proton acceptor is D314. Residues R345, R387, and K412 each contribute to the phosphoenolpyruvate site.

The protein belongs to the EPSP synthase family. In terms of assembly, monomer.

Its subcellular location is the cytoplasm. The enzyme catalyses 3-phosphoshikimate + phosphoenolpyruvate = 5-O-(1-carboxyvinyl)-3-phosphoshikimate + phosphate. The protein operates within metabolic intermediate biosynthesis; chorismate biosynthesis; chorismate from D-erythrose 4-phosphate and phosphoenolpyruvate: step 6/7. Catalyzes the transfer of the enolpyruvyl moiety of phosphoenolpyruvate (PEP) to the 5-hydroxyl of shikimate-3-phosphate (S3P) to produce enolpyruvyl shikimate-3-phosphate and inorganic phosphate. In Buchnera aphidicola subsp. Acyrthosiphon pisum (strain 5A), this protein is 3-phosphoshikimate 1-carboxyvinyltransferase.